A 276-amino-acid polypeptide reads, in one-letter code: Glutamate 5-kinase (276 aa).

Position 14 (lysine 14) interacts with ATP. Serine 54, aspartate 141, and asparagine 157 together coordinate substrate. Residues serine 177 to aspartate 178 and threonine 219 to lysine 225 contribute to the ATP site.

This sequence belongs to the glutamate 5-kinase family.

The protein resides in the cytoplasm. It carries out the reaction L-glutamate + ATP = L-glutamyl 5-phosphate + ADP. It participates in amino-acid biosynthesis; L-proline biosynthesis; L-glutamate 5-semialdehyde from L-glutamate: step 1/2. Functionally, catalyzes the transfer of a phosphate group to glutamate to form L-glutamate 5-phosphate. The sequence is that of Glutamate 5-kinase from Listeria innocua serovar 6a (strain ATCC BAA-680 / CLIP 11262).